Here is a 323-residue protein sequence, read N- to C-terminus: GTP 3',8-cyclase (323 aa).

The region spanning T4–N226 is the Radical SAM core domain. Residue R13 coordinates GTP. Residues C20 and C24 each coordinate [4Fe-4S] cluster. An S-adenosyl-L-methionine-binding site is contributed by Y26. C27 lines the [4Fe-4S] cluster pocket. Position 63 (R63) interacts with GTP. G67 is a binding site for S-adenosyl-L-methionine. T94 provides a ligand contact to GTP. S-adenosyl-L-methionine is bound at residue S118. K155 is a binding site for GTP. Residue M189 coordinates S-adenosyl-L-methionine. [4Fe-4S] cluster contacts are provided by C252 and C255. R257–R259 provides a ligand contact to GTP. C269 provides a ligand contact to [4Fe-4S] cluster.

It belongs to the radical SAM superfamily. MoaA family. In terms of assembly, monomer and homodimer. Requires [4Fe-4S] cluster as cofactor.

The enzyme catalyses GTP + AH2 + S-adenosyl-L-methionine = (8S)-3',8-cyclo-7,8-dihydroguanosine 5'-triphosphate + 5'-deoxyadenosine + L-methionine + A + H(+). It participates in cofactor biosynthesis; molybdopterin biosynthesis. Its function is as follows. Catalyzes the cyclization of GTP to (8S)-3',8-cyclo-7,8-dihydroguanosine 5'-triphosphate. This chain is GTP 3',8-cyclase, found in Moorella thermoacetica (strain ATCC 39073 / JCM 9320).